The primary structure comprises 201 residues: Recombination protein RecR (201 aa).

The C4-type zinc-finger motif lies at 57–72 (CADCRTFTEQDVCNIC). Residues 81–176 (GQICVVESPA…EASRIAHGVP (96 aa)) enclose the Toprim domain.

This sequence belongs to the RecR family.

Its function is as follows. May play a role in DNA repair. It seems to be involved in an RecBC-independent recombinational process of DNA repair. It may act with RecF and RecO. The protein is Recombination protein RecR of Salmonella agona (strain SL483).